Here is a 98-residue protein sequence, read N- to C-terminus: Integration host factor subunit beta (98 aa).

This sequence belongs to the bacterial histone-like protein family. In terms of assembly, heterodimer of an alpha and a beta chain.

This protein is one of the two subunits of integration host factor, a specific DNA-binding protein that functions in genetic recombination as well as in transcriptional and translational control. The protein is Integration host factor subunit beta of Pseudomonas putida (strain W619).